We begin with the raw amino-acid sequence, 179 residues long: ATP synthase subunit delta (179 aa).

It belongs to the ATPase delta chain family. F-type ATPases have 2 components, F(1) - the catalytic core - and F(0) - the membrane proton channel. F(1) has five subunits: alpha(3), beta(3), gamma(1), delta(1), epsilon(1). F(0) has three main subunits: a(1), b(2) and c(10-14). The alpha and beta chains form an alternating ring which encloses part of the gamma chain. F(1) is attached to F(0) by a central stalk formed by the gamma and epsilon chains, while a peripheral stalk is formed by the delta and b chains.

Its subcellular location is the cell inner membrane. In terms of biological role, f(1)F(0) ATP synthase produces ATP from ADP in the presence of a proton or sodium gradient. F-type ATPases consist of two structural domains, F(1) containing the extramembraneous catalytic core and F(0) containing the membrane proton channel, linked together by a central stalk and a peripheral stalk. During catalysis, ATP synthesis in the catalytic domain of F(1) is coupled via a rotary mechanism of the central stalk subunits to proton translocation. This protein is part of the stalk that links CF(0) to CF(1). It either transmits conformational changes from CF(0) to CF(1) or is implicated in proton conduction. This is ATP synthase subunit delta from Burkholderia cenocepacia (strain ATCC BAA-245 / DSM 16553 / LMG 16656 / NCTC 13227 / J2315 / CF5610) (Burkholderia cepacia (strain J2315)).